The following is a 976-amino-acid chain: Vacuolar membrane protease (976 aa).

The Cytoplasmic segment spans residues 1–51; sequence MPLSTGLTLSSLNVMEKADNHYNMMTKQPPALSPVDMVSSRRGFNPIAFTP. A helical membrane pass occupies residues 52 to 72; the sequence is WPVTILSSLVYLAFIIPIIVV. Residues 73–399 lie on the Vacuolar side of the membrane; sequence HHLVPPAPKE…DNGNDGKLNN (327 aa). Asparagine 147 and asparagine 150 each carry an N-linked (GlcNAc...) asparagine glycan. Residues histidine 206 and aspartate 218 each contribute to the Zn(2+) site. Glutamate 252 serves as the catalytic Proton acceptor. Zn(2+)-binding residues include glutamate 253, glutamate 278, and histidine 351. A helical transmembrane segment spans residues 400-420; the sequence is GAGTLGVWFDFYGSSFAVFEL. Topologically, residues 421–427 are cytoplasmic; it reads NTLFGHS. The helical transmembrane segment at 428 to 448 threads the bilayer; sequence VALLVVAPLLLIATCVTLYTL. At 449-477 the chain is on the vacuolar side; that stretch reads DKMYMFSMYTYLSESGGQVSLYGLRGLFR. A helical membrane pass occupies residues 478 to 498; it reads FPLILGISTALTIGLAFLLMK. Topologically, residues 499 to 519 are cytoplasmic; the sequence is ANPFIIYSSPYAVWNPSALHR. Residues 520–540 traverse the membrane as a helical segment; it reads AYAFTWMFGMMWVLLVIATVY. Residues 541–550 lie on the Vacuolar side of the membrane; it reads QKQHGIASSY. A helical membrane pass occupies residues 551–571; sequence FIVFYFAGVSIATWISYLELF. Topologically, residues 572 to 675 are cytoplasmic; it reads GLPTTQDYAR…HRLEQRWSIN (104 aa). The disordered stretch occupies residues 590–633; the sequence is TPSSDSRLLAPSADELPPSGSAAGHDFNPEDVEDEEPTESTSLL. Acidic residues predominate over residues 618–627; sequence PEDVEDEEPT. The chain crosses the membrane as a helical span at residues 676–696; that stretch reads LISSAWILQFLFVAPIVIILL. Topologically, residues 697-718 are vacuolar; the sequence is GQLGLFLTSATYQIGADGGSQL. Residues 719 to 739 form a helical membrane-spanning segment; the sequence is VIYVGIAVLSVLILLPLFPFI. The Cytoplasmic portion of the chain corresponds to 740-745; the sequence is HRFTYH. The chain crosses the membrane as a helical span at residues 746-766; sequence IPTFLLFVLIGTLVYNLTAFP. Residues 767-976 lie on the Vacuolar side of the membrane; sequence FSHSNRLKVA…LVEGSHSFKL (210 aa). Asparagine 848 carries an N-linked (GlcNAc...) asparagine glycan.

It belongs to the peptidase M28 family. Requires Zn(2+) as cofactor.

It localises to the vacuole membrane. Its function is as follows. May be involved in vacuolar sorting and osmoregulation. The sequence is that of Vacuolar membrane protease from Arthroderma otae (strain ATCC MYA-4605 / CBS 113480) (Microsporum canis).